The chain runs to 199 residues: dTTP/UTP pyrophosphatase (199 aa).

Residue aspartate 76 is the Proton acceptor of the active site.

Belongs to the Maf family. YhdE subfamily. The cofactor is a divalent metal cation.

Its subcellular location is the cytoplasm. The enzyme catalyses dTTP + H2O = dTMP + diphosphate + H(+). It catalyses the reaction UTP + H2O = UMP + diphosphate + H(+). Its function is as follows. Nucleoside triphosphate pyrophosphatase that hydrolyzes dTTP and UTP. May have a dual role in cell division arrest and in preventing the incorporation of modified nucleotides into cellular nucleic acids. The chain is dTTP/UTP pyrophosphatase from Chlorobaculum parvum (strain DSM 263 / NCIMB 8327) (Chlorobium vibrioforme subsp. thiosulfatophilum).